The chain runs to 122 residues: Large ribosomal subunit protein uL24 (122 aa).

The interval 43 to 64 (IRKHHRRDMPTPQGGTTKGGII) is disordered.

It belongs to the universal ribosomal protein uL24 family. Part of the 50S ribosomal subunit.

In terms of biological role, one of two assembly initiator proteins, it binds directly to the 5'-end of the 23S rRNA, where it nucleates assembly of the 50S subunit. Functionally, one of the proteins that surrounds the polypeptide exit tunnel on the outside of the subunit. The protein is Large ribosomal subunit protein uL24 of Cutibacterium acnes (strain DSM 16379 / KPA171202) (Propionibacterium acnes).